The sequence spans 357 residues: Alanine racemase (357 aa).

The active-site Proton acceptor; specific for D-alanine is K34. Residue K34 is modified to N6-(pyridoxal phosphate)lysine. Residue R130 coordinates substrate. Y253 (proton acceptor; specific for L-alanine) is an active-site residue. Residue M301 coordinates substrate.

Belongs to the alanine racemase family. Pyridoxal 5'-phosphate is required as a cofactor.

The catalysed reaction is L-alanine = D-alanine. It functions in the pathway amino-acid biosynthesis; D-alanine biosynthesis; D-alanine from L-alanine: step 1/1. Its function is as follows. Catalyzes the interconversion of L-alanine and D-alanine. May also act on other amino acids. This chain is Alanine racemase (alr), found in Mannheimia succiniciproducens (strain KCTC 0769BP / MBEL55E).